Consider the following 214-residue polypeptide: Large ribosomal subunit protein bL25 (214 aa).

A disordered region spans residues 194-214; it reads TTEAEETAEPEVIRRKEEEEE. The span at 204–214 shows a compositional bias: basic and acidic residues; that stretch reads EVIRRKEEEEE.

It belongs to the bacterial ribosomal protein bL25 family. CTC subfamily. In terms of assembly, part of the 50S ribosomal subunit; part of the 5S rRNA/L5/L18/L25 subcomplex. Contacts the 5S rRNA. Binds to the 5S rRNA independently of L5 and L18.

Functionally, this is one of the proteins that binds to the 5S RNA in the ribosome where it forms part of the central protuberance. The protein is Large ribosomal subunit protein bL25 of Thermotoga petrophila (strain ATCC BAA-488 / DSM 13995 / JCM 10881 / RKU-1).